The chain runs to 399 residues: Zinc finger TRAF-type-containing protein 1 (399 aa).

Gly residues predominate over residues Met1–Ala13. The tract at residues Met1–Val20 is disordered. An RING-type; degenerate zinc finger spans residues Cys106–Arg151. The TRAF-type zinc finger occupies Cys152–Cys210.

It belongs to the ZFTRAF1 family. In terms of assembly, interacts with LGALS3.

Its subcellular location is the cytoplasm. It is found in the perinuclear region. This Rattus norvegicus (Rat) protein is Zinc finger TRAF-type-containing protein 1.